A 364-amino-acid polypeptide reads, in one-letter code: UDP-N-acetylglucosamine--N-acetylmuramyl-(pentapeptide) pyrophosphoryl-undecaprenol N-acetylglucosamine transferase (364 aa).

UDP-N-acetyl-alpha-D-glucosamine-binding positions include 13-15 (TGG), asparagine 125, arginine 165, serine 192, and glutamine 293.

The protein belongs to the glycosyltransferase 28 family. MurG subfamily.

The protein resides in the cell inner membrane. The catalysed reaction is di-trans,octa-cis-undecaprenyl diphospho-N-acetyl-alpha-D-muramoyl-L-alanyl-D-glutamyl-meso-2,6-diaminopimeloyl-D-alanyl-D-alanine + UDP-N-acetyl-alpha-D-glucosamine = di-trans,octa-cis-undecaprenyl diphospho-[N-acetyl-alpha-D-glucosaminyl-(1-&gt;4)]-N-acetyl-alpha-D-muramoyl-L-alanyl-D-glutamyl-meso-2,6-diaminopimeloyl-D-alanyl-D-alanine + UDP + H(+). It functions in the pathway cell wall biogenesis; peptidoglycan biosynthesis. Functionally, cell wall formation. Catalyzes the transfer of a GlcNAc subunit on undecaprenyl-pyrophosphoryl-MurNAc-pentapeptide (lipid intermediate I) to form undecaprenyl-pyrophosphoryl-MurNAc-(pentapeptide)GlcNAc (lipid intermediate II). This Cereibacter sphaeroides (strain ATCC 17025 / ATH 2.4.3) (Rhodobacter sphaeroides) protein is UDP-N-acetylglucosamine--N-acetylmuramyl-(pentapeptide) pyrophosphoryl-undecaprenol N-acetylglucosamine transferase.